The primary structure comprises 328 residues: Malate dehydrogenase (328 aa).

Position 16–22 (16–22 (GAAGQIS)) interacts with NAD(+). Residues arginine 97 and arginine 103 each coordinate substrate. Residues asparagine 110, glutamine 117, and 134–136 (VGN) each bind NAD(+). Residues asparagine 136 and arginine 167 each contribute to the substrate site. Residue histidine 192 is the Proton acceptor of the active site.

The protein belongs to the LDH/MDH superfamily. MDH type 2 family.

The catalysed reaction is (S)-malate + NAD(+) = oxaloacetate + NADH + H(+). Functionally, catalyzes the reversible oxidation of malate to oxaloacetate. The sequence is that of Malate dehydrogenase from Corynebacterium glutamicum (strain R).